A 134-amino-acid polypeptide reads, in one-letter code: Fluoride-specific ion channel FluC 3 (134 aa).

4 helical membrane passes run 4–24, 35–55, 67–87, and 100–120; these read LIIL…FIML, MDIF…TSFF, MVGT…FGAV, and ICYL…GLMI. Gly74 and Ser77 together coordinate Na(+).

This sequence belongs to the fluoride channel Fluc/FEX (TC 1.A.43) family.

Its subcellular location is the cell inner membrane. The enzyme catalyses fluoride(in) = fluoride(out). With respect to regulation, na(+) is not transported, but it plays an essential structural role and its presence is essential for fluoride channel function. In terms of biological role, fluoride-specific ion channel. Important for reducing fluoride concentration in the cell, thus reducing its toxicity. This is Fluoride-specific ion channel FluC 3 from Yersinia pseudotuberculosis serotype I (strain IP32953).